The sequence spans 161 residues: Putative allophycocyanin subunit alpha 2 (161 aa).

At N71 the chain carries N4-methylasparagine. C81 is a binding site for (2R,3E)-phycocyanobilin.

It belongs to the phycobiliprotein family. In terms of assembly, heterohexamer of two alpha chains, one alpha-B chain and three beta chains. Contains one covalently linked phycocyanobilin chromophore. The chromophore is added by phycocyanobilin lyase CpcS 1.

Its subcellular location is the cellular thylakoid membrane. Its function is as follows. Light-harvesting photosynthetic bile pigment-protein from the phycobiliprotein complex. Allophycocyanin has a maximum absorption at approximately 650 to 653 nanometers. This is Putative allophycocyanin subunit alpha 2 (apcA2) from Nostoc sp. (strain PCC 7120 / SAG 25.82 / UTEX 2576).